A 389-amino-acid chain; its full sequence is Sulfate adenylyltransferase (389 aa).

This sequence belongs to the sulfate adenylyltransferase family.

The catalysed reaction is sulfate + ATP + H(+) = adenosine 5'-phosphosulfate + diphosphate. The protein operates within sulfur metabolism; hydrogen sulfide biosynthesis; sulfite from sulfate: step 1/3. The sequence is that of Sulfate adenylyltransferase from Desulforamulus reducens (strain ATCC BAA-1160 / DSM 100696 / MI-1) (Desulfotomaculum reducens).